We begin with the raw amino-acid sequence, 594 residues long: Proteasome-associated ATPase (594 aa).

The segment covering 1–12 has biased composition (polar residues); that stretch reads MTETSANKPENT. Residues 1-20 are disordered; it reads MTETSANKPENTQAHEGRDY. Positions 18-71 form a coiled coil; it reads RDYSVLERQFNVLRDKLRNVDRQLAAATQNNTKMTTTLQSAKAEILRLKSALEK. 282–287 serves as a coordination point for ATP; that stretch reads GCGKTL. The docks into pockets in the proteasome alpha-ring stretch occupies residues 593 to 594; that stretch reads YL.

This sequence belongs to the AAA ATPase family. Homohexamer. Assembles into a hexameric ring structure that caps the 20S proteasome core. Strongly interacts with the prokaryotic ubiquitin-like protein Pup through a hydrophobic interface; the interacting region of ARC lies in its N-terminal coiled-coil domain. There is one Pup binding site per ARC hexamer ring. Upon ATP-binding, the C-terminus of ARC interacts with the alpha-rings of the proteasome core, possibly by binding to the intersubunit pockets.

Its pathway is protein degradation; proteasomal Pup-dependent pathway. ATPase which is responsible for recognizing, binding, unfolding and translocation of pupylated proteins into the bacterial 20S proteasome core particle. May be essential for opening the gate of the 20S proteasome via an interaction with its C-terminus, thereby allowing substrate entry and access to the site of proteolysis. Thus, the C-termini of the proteasomal ATPase may function like a 'key in a lock' to induce gate opening and therefore regulate proteolysis. This is Proteasome-associated ATPase from Renibacterium salmoninarum (strain ATCC 33209 / DSM 20767 / JCM 11484 / NBRC 15589 / NCIMB 2235).